A 129-amino-acid polypeptide reads, in one-letter code: Profilin-4 (129 aa).

The protein belongs to the profilin family. In terms of tissue distribution, expressed in testis, in seminiferous tubules (at protein level). Expressed in spermatocytes and spermatids, but not in spermatogonium.

It localises to the cytoplasm. Its function is as follows. Involved in male fertility. Required for manchette development and acrosome biogenesis during spermiogenesis. Binds in vitro to phospholipids, including phosphatidylinositol 3-phosphate (PtdIns(3)P), phosphatidylinositol 4,5-bisphosphate (PtdIns(4,5)P2), phosphatidylinositol 4-phosphate (PtdIns(4)P) and phosphatidic acid (PA). Contrary to other profilin family members, does not bind to actin in vitro. The protein is Profilin-4 (Pfn4) of Rattus norvegicus (Rat).